The following is a 177-amino-acid chain: Ribonuclease alpha-sarcin (177 aa).

An N-terminal signal peptide occupies residues 1 to 27 (MVAIKNLVLVALTAVTALAVPSPLEAR). 2 disulfides stabilise this stretch: Cys33-Cys175 and Cys103-Cys159. Residue His77 is part of the active site. The segment at 86 to 119 (DGKLPKGRTPIKFGKSDCDRPPKHSKDGNGKTDH) is disordered. Residues 99 to 119 (GKSDCDRPPKHSKDGNGKTDH) show a composition bias toward basic and acidic residues. Glu123 functions as the Proton acceptor in the catalytic mechanism. The active-site Proton donor is the His164.

This sequence belongs to the ribonuclease U2 family.

Its subcellular location is the secreted. It catalyses the reaction a 28S rRNA containing guanosine-adenosine pair + H2O = an [RNA fragment]-3'-adenosine-3'-phosphate + a 5'-a hydroxy-guanosine-3'-[RNA fragment].. In terms of biological role, alpha-sarcin is specific for purines in both single- and double-stranded RNA. Its toxic action on eukaryotic cells is the result of cleavage of a single phosphodiester bond in the 60S subunit of ribosomes. Inhibits both the EFl (elongation factor 1)-dependent binding of aminoacyl-tRNA and the GTP-dependent binding of EF2 (elongation factor 2) to ribosomes. This is Ribonuclease alpha-sarcin (sar) from Aspergillus giganteus.